A 105-amino-acid polypeptide reads, in one-letter code: uncharacterized protein (105 aa).

A helical transmembrane segment spans residues 4–26; sequence TQILLILFVGILVTTPHDIFIII.

It localises to the membrane. This is an uncharacterized protein from Rickettsia conorii (strain ATCC VR-613 / Malish 7).